A 174-amino-acid chain; its full sequence is Small ribosomal subunit protein uS5c (174 aa).

The 64-residue stretch at 17–80 folds into the S5 DRBM domain; sequence WEERVVQVKR…TDAKKHLVTV (64 aa).

Belongs to the universal ribosomal protein uS5 family. As to quaternary structure, part of the 30S ribosomal subunit. Contacts protein S4.

It localises to the plastid. The protein localises to the chloroplast. Its function is as follows. With S4 and S12 plays an important role in translational accuracy. This Pyropia yezoensis (Susabi-nori) protein is Small ribosomal subunit protein uS5c (rps5).